The primary structure comprises 436 residues: UDP-N-acetylmuramate--L-alanine ligase (436 aa).

108 to 114 (GAHGKTS) is an ATP binding site.

It belongs to the MurCDEF family.

The protein localises to the cytoplasm. It carries out the reaction UDP-N-acetyl-alpha-D-muramate + L-alanine + ATP = UDP-N-acetyl-alpha-D-muramoyl-L-alanine + ADP + phosphate + H(+). Its pathway is cell wall biogenesis; peptidoglycan biosynthesis. Cell wall formation. The polypeptide is UDP-N-acetylmuramate--L-alanine ligase (Bacillus cereus (strain ZK / E33L)).